The primary structure comprises 397 residues: Thioredoxin-interacting protein (397 aa).

K213 is covalently cross-linked (Glycyl lysine isopeptide (Lys-Gly) (interchain with G-Cter in ubiquitin)). At S362 the chain carries Phosphoserine.

It belongs to the arrestin family. In terms of assembly, homodimer; disulfide-linked. Interacts with TXN/thioredoxin through its redox-active site. Interacts with transcriptional repressors ZBTB16, ZBTB32 and HDAC1. Interacts with DDIT4. Ubiquitinated; undergoes heterotypic 'Lys-48'-/'Lys-63'-branched polyubiquitination catalyzed by ITCH and UBR5 resulting in proteasomal degradation. Deubiquitinated by USP5, leading to TXNIP stabilization. As to expression, ubiquitously expressed.

It is found in the cytoplasm. Its function is as follows. May act as an oxidative stress mediator by inhibiting thioredoxin activity or by limiting its bioavailability. Interacts with COPS5 and restores COPS5-induced suppression of CDKN1B stability, blocking the COPS5-mediated translocation of CDKN1B from the nucleus to the cytoplasm. Functions as a transcriptional repressor, possibly by acting as a bridge molecule between transcription factors and corepressor complexes, and over-expression will induce G0/G1 cell cycle arrest. Required for the maturation of natural killer cells. Acts as a suppressor of tumor cell growth. Inhibits the proteasomal degradation of DDIT4, and thereby contributes to the inhibition of the mammalian target of rapamycin complex 1 (mTORC1). The chain is Thioredoxin-interacting protein (Txnip) from Mus musculus (Mouse).